A 79-amino-acid chain; its full sequence is D-alanyl carrier protein (79 aa).

The region spanning 1-77 is the Carrier domain; the sequence is MDTKQAVLDI…KIIAKVESLR (77 aa). Ser35 carries the post-translational modification O-(pantetheine 4'-phosphoryl)serine.

It belongs to the DltC family. Post-translationally, 4'-phosphopantetheine is transferred from CoA to a specific serine of apo-DCP.

The protein localises to the cytoplasm. It participates in cell wall biogenesis; lipoteichoic acid biosynthesis. Carrier protein involved in the D-alanylation of lipoteichoic acid (LTA). The loading of thioester-linked D-alanine onto DltC is catalyzed by D-alanine--D-alanyl carrier protein ligase DltA. The DltC-carried D-alanyl group is further transferred to cell membrane phosphatidylglycerol (PG) by forming an ester bond, probably catalyzed by DltD. D-alanylation of LTA plays an important role in modulating the properties of the cell wall in Gram-positive bacteria, influencing the net charge of the cell wall. The polypeptide is D-alanyl carrier protein (Lactobacillus johnsonii (strain CNCM I-12250 / La1 / NCC 533)).